The primary structure comprises 175 residues: ATP synthase subunit b (175 aa).

A helical transmembrane segment spans residues 19–39; the sequence is LVVGTIAFALLVFVLLKFVMP.

This sequence belongs to the ATPase B chain family. As to quaternary structure, F-type ATPases have 2 components, F(1) - the catalytic core - and F(0) - the membrane proton channel. F(1) has five subunits: alpha(3), beta(3), gamma(1), delta(1), epsilon(1). F(0) has three main subunits: a(1), b(2) and c(10-14). The alpha and beta chains form an alternating ring which encloses part of the gamma chain. F(1) is attached to F(0) by a central stalk formed by the gamma and epsilon chains, while a peripheral stalk is formed by the delta and b chains.

Its subcellular location is the cell membrane. Functionally, f(1)F(0) ATP synthase produces ATP from ADP in the presence of a proton or sodium gradient. F-type ATPases consist of two structural domains, F(1) containing the extramembraneous catalytic core and F(0) containing the membrane proton channel, linked together by a central stalk and a peripheral stalk. During catalysis, ATP synthesis in the catalytic domain of F(1) is coupled via a rotary mechanism of the central stalk subunits to proton translocation. In terms of biological role, component of the F(0) channel, it forms part of the peripheral stalk, linking F(1) to F(0). This is ATP synthase subunit b from Salinispora tropica (strain ATCC BAA-916 / DSM 44818 / JCM 13857 / NBRC 105044 / CNB-440).